Here is a 363-residue protein sequence, read N- to C-terminus: Spindle pole body component SPC42 (363 aa).

A coiled-coil region spans residues 60–137; it reads EFINKAVQQN…ANSTFKEMRF (78 aa). Residues 160 to 184 form a disordered region; the sequence is PKHRAPDATGNPRTTNKVSNTSDQD. The span at 170 to 182 shows a compositional bias: polar residues; it reads NPRTTNKVSNTSD. Phosphoserine is present on residues Ser213, Ser217, Ser284, and Ser329. A coiled-coil region spans residues 249 to 298; that stretch reads DIMMYESAELKRVEEEIEELKRKILVRKKHDLRKLSLNNQLQELQSMMDG. Positions 310 to 363 are disordered; sequence HNHATHRHSSQSSRDYSPSSDACLECSNDLYEKNRVKPENNMSETFATPTPNNR. A compositionally biased stretch (low complexity) spans 319-329; the sequence is SQSSRDYSPSS. Polar residues predominate over residues 349–363; the sequence is NNMSETFATPTPNNR.

Belongs to the SPC42 family. Component of the SPC110 complex containing at least CMD1, SPC29, SPC42 and SCP110.

The protein resides in the nucleus. The protein localises to the cytoplasm. It is found in the cytoskeleton. Its subcellular location is the microtubule organizing center. It localises to the spindle pole body. In terms of biological role, forms a polymeric layer at the periphery of the spindle pole body (SPB) central plaque which has an essential function during SPB duplication and may facilitate attachment of the SPB to the nuclear membrane. This Saccharomyces cerevisiae (strain ATCC 204508 / S288c) (Baker's yeast) protein is Spindle pole body component SPC42 (SPC42).